Here is a 141-residue protein sequence, read N- to C-terminus: HTH-type transcriptional repressor NsrR (141 aa).

The HTH rrf2-type domain maps to 2–129 (QLTSFTDYGL…DNYTLADLVE (128 aa)). A DNA-binding region (H-T-H motif) is located at residues 28–51 (ISEVTDVYGVSRNHMVKIINQLSR). [2Fe-2S] cluster-binding residues include Cys91, Cys96, and Cys102.

It depends on [2Fe-2S] cluster as a cofactor.

Functionally, nitric oxide-sensitive repressor of genes involved in protecting the cell against nitrosative stress. May require iron for activity. In Escherichia coli O139:H28 (strain E24377A / ETEC), this protein is HTH-type transcriptional repressor NsrR.